The following is a 178-amino-acid chain: RNA pyrophosphohydrolase (178 aa).

Positions 18-171 (PYRPCVGLMV…KRKVYEQVVA (154 aa)) constitute a Nudix hydrolase domain. Positions 59 to 80 (GGIDKGEDPAQAALRELYEETG) match the Nudix box motif.

This sequence belongs to the Nudix hydrolase family. RppH subfamily. It depends on a divalent metal cation as a cofactor.

In terms of biological role, accelerates the degradation of transcripts by removing pyrophosphate from the 5'-end of triphosphorylated RNA, leading to a more labile monophosphorylated state that can stimulate subsequent ribonuclease cleavage. The polypeptide is RNA pyrophosphohydrolase (Brucella abortus (strain 2308)).